The sequence spans 860 residues: Leucine--tRNA ligase (860 aa).

A 'HIGH' region motif is present at residues 42 to 52 (PYPSGRLHMGH). The 'KMSKS' region motif lies at 619–623 (KMSKS). Position 622 (K622) interacts with ATP.

It belongs to the class-I aminoacyl-tRNA synthetase family.

It localises to the cytoplasm. The catalysed reaction is tRNA(Leu) + L-leucine + ATP = L-leucyl-tRNA(Leu) + AMP + diphosphate. This is Leucine--tRNA ligase from Escherichia coli O127:H6 (strain E2348/69 / EPEC).